The primary structure comprises 504 residues: MSFSVDVLANIAIELQRGIGHQDRFQRLITTLRQVLECDASALLRYDSRQFIPLAIDGLAKDVLGRRFALEGHPRLEAIARAGDVVRFPADSELPDPYDGLIPGQESLKVHACVGLPLFAGQNLIGALTLDGMQPDQFDVFSDEELRLIAALAAGALSNALLIEQLESQNMLPGDAAPFEAVKQTQMIGLSPGMTQLKKEIEIVAASDLNVLISGETGTGKELVAKAIHEASPRAVNPLVYLNCAALPESVAESELFGHVKGAFTGAISNRSGKFEMADNGTLFLDEIGELSLALQAKLLRVLQYGDIQRVGDDRSLRVDVRVLAATNRDLREEVLAGRFRADLFHRLSVFPLSVPPLRERGDDVILLAGYFCEQCRLRLGLSRVVLSAGARNLLQHYNFPGNVRELEHAIHRAVVLARATRSGDEVILEAQHFAFPEVTLPPPEVAAVPVVKQNLREATEAFQRETIRQALAQNHHNWAACARMLETDVANLHRLAKRLGLKD.

A 4-aspartylphosphate modification is found at Asp-57. One can recognise a Sigma-54 factor interaction domain in the interval 187 to 416 (MIGLSPGMTQ…LEHAIHRAVV (230 aa)). Residues 215-222 (GETGTGKE) and 278-287 (ADNGTLFLDE) contribute to the ATP site. Residues 479–498 (WAACARMLETDVANLHRLAK) constitute a DNA-binding region (H-T-H motif).

Its pathway is nitrogen metabolism; nitric oxide reduction. In terms of biological role, required for the expression of anaerobic nitric oxide (NO) reductase, acts as a transcriptional activator for at least the norVW operon. Activation also requires sigma-54. In Escherichia coli O127:H6 (strain E2348/69 / EPEC), this protein is Anaerobic nitric oxide reductase transcription regulator NorR.